Consider the following 420-residue polypeptide: E3 ubiquitin protein ligase DRIP2 (420 aa).

The segment at 20–61 (CPLCDKLLRDATTISECLHTFCRKCIYEKITEDEIESCPVCD) adopts an RING-type zinc-finger fold. A compositionally biased stretch (polar residues) spans 113–123 (ISSLVVSTPRV). Disordered stretches follow at residues 113 to 201 (ISSL…KDVD) and 226 to 289 (DPKS…TFGD). A compositionally biased stretch (basic and acidic residues) spans 154 to 165 (KKEEEFGDDHVE). Composition is skewed to polar residues over residues 166–194 (SASS…SLSN) and 232–242 (GNASHNDVQGS). The segment covering 244–253 (TKTKDHKRKC) has biased composition (basic residues). Residues 260–273 (SNNGDPTTSETATL) show a composition bias toward polar residues. Positions 274–284 (KRTRRTRRKRS) are enriched in basic residues.

In terms of assembly, interacts with DREB2A. In terms of processing, auto-ubiquitinated. As to expression, expressed in roots, leaves and flowers.

It catalyses the reaction S-ubiquitinyl-[E2 ubiquitin-conjugating enzyme]-L-cysteine + [acceptor protein]-L-lysine = [E2 ubiquitin-conjugating enzyme]-L-cysteine + N(6)-ubiquitinyl-[acceptor protein]-L-lysine.. It functions in the pathway protein modification; protein ubiquitination. Functionally, E3 ubiquitin-protein ligase that acts as a negative regulator of the response to water stress. Mediates ubiquitination and subsequent proteasomal degradation of the drought-induced transcriptional activator DREB2A. Functionally redundant with DRIP1. The polypeptide is E3 ubiquitin protein ligase DRIP2 (DRIP2) (Arabidopsis thaliana (Mouse-ear cress)).